The chain runs to 261 residues: Imidazole glycerol phosphate synthase subunit HisF (261 aa).

Catalysis depends on residues aspartate 16 and aspartate 135.

The protein belongs to the HisA/HisF family. In terms of assembly, heterodimer of HisH and HisF.

The protein resides in the cytoplasm. The enzyme catalyses 5-[(5-phospho-1-deoxy-D-ribulos-1-ylimino)methylamino]-1-(5-phospho-beta-D-ribosyl)imidazole-4-carboxamide + L-glutamine = D-erythro-1-(imidazol-4-yl)glycerol 3-phosphate + 5-amino-1-(5-phospho-beta-D-ribosyl)imidazole-4-carboxamide + L-glutamate + H(+). It functions in the pathway amino-acid biosynthesis; L-histidine biosynthesis; L-histidine from 5-phospho-alpha-D-ribose 1-diphosphate: step 5/9. Its function is as follows. IGPS catalyzes the conversion of PRFAR and glutamine to IGP, AICAR and glutamate. The HisF subunit catalyzes the cyclization activity that produces IGP and AICAR from PRFAR using the ammonia provided by the HisH subunit. In Mycobacterium marinum (strain ATCC BAA-535 / M), this protein is Imidazole glycerol phosphate synthase subunit HisF.